Reading from the N-terminus, the 113-residue chain is Nucleoid-associated protein SAV_4556 (113 aa).

Belongs to the YbaB/EbfC family. Homodimer.

Its subcellular location is the cytoplasm. The protein localises to the nucleoid. Its function is as follows. Binds to DNA and alters its conformation. May be involved in regulation of gene expression, nucleoid organization and DNA protection. This chain is Nucleoid-associated protein SAV_4556, found in Streptomyces avermitilis (strain ATCC 31267 / DSM 46492 / JCM 5070 / NBRC 14893 / NCIMB 12804 / NRRL 8165 / MA-4680).